A 423-amino-acid chain; its full sequence is Histidine--tRNA ligase (423 aa).

This sequence belongs to the class-II aminoacyl-tRNA synthetase family. As to quaternary structure, homodimer.

The protein localises to the cytoplasm. The catalysed reaction is tRNA(His) + L-histidine + ATP = L-histidyl-tRNA(His) + AMP + diphosphate + H(+). The polypeptide is Histidine--tRNA ligase (Actinobacillus pleuropneumoniae serotype 7 (strain AP76)).